Here is a 426-residue protein sequence, read N- to C-terminus: Glutamate-1-semialdehyde 2,1-aminomutase (426 aa).

At Lys267 the chain carries N6-(pyridoxal phosphate)lysine.

Belongs to the class-III pyridoxal-phosphate-dependent aminotransferase family. HemL subfamily. As to quaternary structure, homodimer. Pyridoxal 5'-phosphate serves as cofactor.

It localises to the cytoplasm. The catalysed reaction is (S)-4-amino-5-oxopentanoate = 5-aminolevulinate. It participates in porphyrin-containing compound metabolism; protoporphyrin-IX biosynthesis; 5-aminolevulinate from L-glutamyl-tRNA(Glu): step 2/2. The protein is Glutamate-1-semialdehyde 2,1-aminomutase of Bdellovibrio bacteriovorus (strain ATCC 15356 / DSM 50701 / NCIMB 9529 / HD100).